A 418-amino-acid polypeptide reads, in one-letter code: Glutamyl-tRNA reductase (418 aa).

Substrate contacts are provided by residues 49–52 (TCNR), serine 109, 114–116 (EPQ), and glutamine 120. Cysteine 50 functions as the Nucleophile in the catalytic mechanism. Residue 189–194 (GAGETI) coordinates NADP(+).

This sequence belongs to the glutamyl-tRNA reductase family. In terms of assembly, homodimer.

It catalyses the reaction (S)-4-amino-5-oxopentanoate + tRNA(Glu) + NADP(+) = L-glutamyl-tRNA(Glu) + NADPH + H(+). It functions in the pathway porphyrin-containing compound metabolism; protoporphyrin-IX biosynthesis; 5-aminolevulinate from L-glutamyl-tRNA(Glu): step 1/2. Functionally, catalyzes the NADPH-dependent reduction of glutamyl-tRNA(Glu) to glutamate 1-semialdehyde (GSA). The chain is Glutamyl-tRNA reductase from Escherichia coli O9:H4 (strain HS).